The chain runs to 420 residues: Putative U-box domain-containing protein 58 (420 aa).

Positions 4–168 constitute an MIF4G domain; the sequence is NSYVLFARLC…EDALAMKKED (165 aa). A coiled-coil region spans residues 139 to 352; that stretch reads SRVVELEGNY…TAKEQMEKRQ (214 aa). Residues 352–420 enclose the U-box domain; it reads QPPSSFFCPI…ALRSAIEELV (69 aa).

It catalyses the reaction S-ubiquitinyl-[E2 ubiquitin-conjugating enzyme]-L-cysteine + [acceptor protein]-L-lysine = [E2 ubiquitin-conjugating enzyme]-L-cysteine + N(6)-ubiquitinyl-[acceptor protein]-L-lysine.. It participates in protein modification; protein ubiquitination. Functions as an E3 ubiquitin ligase. The chain is Putative U-box domain-containing protein 58 (PUB58) from Arabidopsis thaliana (Mouse-ear cress).